We begin with the raw amino-acid sequence, 151 residues long: Putative membrane protein ORF10 (151 aa).

Helical transmembrane passes span 7 to 23 (LCLA…GVVV) and 107 to 123 (GLVA…IIMY).

The protein localises to the membrane. This chain is Putative membrane protein ORF10 (ORF10), found in Ictalurid herpesvirus 1 (strain Auburn) (IcHV-1).